We begin with the raw amino-acid sequence, 384 residues long: UPF0496 protein At3g28310/At3g28320 (384 aa).

Residues 184–215 adopt a coiled-coil conformation; sequence QESLFDRVTETKERIAKEIEEVQKRISNVNTA. 2 helical membrane-spanning segments follow: residues 217 to 237 and 242 to 262; these read IVSH…CIAL and VGAP…VQWV. Positions 264–361 form a coiled coil; it reads VNYVLNNSLE…TTKITEVCET (98 aa).

It belongs to the UPF0496 family.

Its subcellular location is the membrane. The sequence is that of UPF0496 protein At3g28310/At3g28320 from Arabidopsis thaliana (Mouse-ear cress).